We begin with the raw amino-acid sequence, 97 residues long: MEARDIILRPVITEASTAAMDNKRYTFDVDLRATKTQVKNAVEEIFDVKVVKVNIMNVKGKQKRQGRYVGYTKRRRKAIVQLSADSNEIKLFGDDNE.

The protein belongs to the universal ribosomal protein uL23 family. Part of the 50S ribosomal subunit. Contacts protein L29, and trigger factor when it is bound to the ribosome.

One of the early assembly proteins it binds 23S rRNA. One of the proteins that surrounds the polypeptide exit tunnel on the outside of the ribosome. Forms the main docking site for trigger factor binding to the ribosome. The sequence is that of Large ribosomal subunit protein uL23 from Limosilactobacillus fermentum (strain NBRC 3956 / LMG 18251) (Lactobacillus fermentum).